The primary structure comprises 236 residues: 7-cyano-7-deazaguanine synthase 2 (236 aa).

Residue 11 to 21 (FSGGQDSATCL) coordinates ATP. Cysteine 199, cysteine 214, cysteine 217, and cysteine 220 together coordinate Zn(2+).

It belongs to the QueC family. The cofactor is Zn(2+).

The enzyme catalyses 7-carboxy-7-deazaguanine + NH4(+) + ATP = 7-cyano-7-deazaguanine + ADP + phosphate + H2O + H(+). The protein operates within purine metabolism; 7-cyano-7-deazaguanine biosynthesis. Catalyzes the ATP-dependent conversion of 7-carboxy-7-deazaguanine (CDG) to 7-cyano-7-deazaguanine (preQ(0)). The chain is 7-cyano-7-deazaguanine synthase 2 from Sphingopyxis alaskensis (strain DSM 13593 / LMG 18877 / RB2256) (Sphingomonas alaskensis).